The sequence spans 667 residues: UvrABC system protein B (667 aa).

Residues 25 to 414 (TGLQRGDKHQ…GVVVEQIIRP (390 aa)) enclose the Helicase ATP-binding domain. 38-45 (GVTGSGKT) contacts ATP. The Beta-hairpin motif lies at 91–114 (YYDYYQPEAYVPTTDTFIEKDSSI). In terms of domain architecture, Helicase C-terminal spans 430-596 (QVDDLIHEIR…TVKKSLRSIL (167 aa)). Residues 624–659 (KNEIARVKEEMLAAAANLEFEKAAELRDRMLELDKL) enclose the UVR domain.

Belongs to the UvrB family. As to quaternary structure, forms a heterotetramer with UvrA during the search for lesions. Interacts with UvrC in an incision complex.

It localises to the cytoplasm. The UvrABC repair system catalyzes the recognition and processing of DNA lesions. A damage recognition complex composed of 2 UvrA and 2 UvrB subunits scans DNA for abnormalities. Upon binding of the UvrA(2)B(2) complex to a putative damaged site, the DNA wraps around one UvrB monomer. DNA wrap is dependent on ATP binding by UvrB and probably causes local melting of the DNA helix, facilitating insertion of UvrB beta-hairpin between the DNA strands. Then UvrB probes one DNA strand for the presence of a lesion. If a lesion is found the UvrA subunits dissociate and the UvrB-DNA preincision complex is formed. This complex is subsequently bound by UvrC and the second UvrB is released. If no lesion is found, the DNA wraps around the other UvrB subunit that will check the other stand for damage. The polypeptide is UvrABC system protein B (Syntrophotalea carbinolica (strain DSM 2380 / NBRC 103641 / GraBd1) (Pelobacter carbinolicus)).